The chain runs to 348 residues: Rhodopsin (348 aa).

At 1–33 (TEGPFFYIPMVNTSGVVRSPYEYPQYYLVNPAA) the chain is on the extracellular side. An N-linked (GlcNAc...) asparagine glycan is attached at asparagine 12. The chain crosses the membrane as a helical span at residues 34–58 (YAILGAYMFFLIIIGFPVNFMTLYV). Residues 59 to 70 (TLEHKKLRTPLN) are Cytoplasmic-facing. The helical transmembrane segment at 71-93 (YILLNLAVADLFMVIGGFTTTMY) threads the bilayer. Residues 94–107 (SSMHGYFVLGRLGC) lie on the Extracellular side of the membrane. The cysteines at positions 107 and 184 are disulfide-linked. Residues 108–130 (NMEGFSATLGGMISLWSLAVLAI) traverse the membrane as a helical segment. The 'Ionic lock' involved in activated form stabilization signature appears at 131-133 (ERW). The Cytoplasmic segment spans residues 131-149 (ERWVVVCKPISNFRFGENH). A helical membrane pass occupies residues 150-170 (AIMGVSLTWFMALACTVPPLV). At 171 to 199 (GWSRYIPEGMQCSCGIDYYTRAEGFNNES) the chain is on the extracellular side. An N-linked (GlcNAc...) asparagine glycan is attached at asparagine 197. The chain crosses the membrane as a helical span at residues 200–221 (FVLYMFFCHFLVPLVIIFFCYG). Topologically, residues 222–249 (RLLCAVKEAAAAQQESETTQRAEREVTR) are cytoplasmic. Residues 250-271 (MVIIMVIGFLVCWLPYASVAWF) form a helical membrane-spanning segment. Residues 272–283 (IFTHQGSEFGPL) are Extracellular-facing. Residues 284-305 (FMTIPAFFAKSSSIYNPMIYIC) form a helical membrane-spanning segment. Lysine 293 is modified (N6-(retinylidene)lysine). Residues 306–348 (MNKQFRNCMITTLFCGKNPFEGEEEGASSTKTEASSASSVSPA) lie on the Cytoplasmic side of the membrane. Cysteine 320 carries the S-palmitoyl cysteine lipid modification. The tract at residues 327-348 (GEEEGASSTKTEASSASSVSPA) is disordered. The span at 332–348 (ASSTKTEASSASSVSPA) shows a compositional bias: low complexity.

The protein belongs to the G-protein coupled receptor 1 family. Opsin subfamily. In terms of processing, phosphorylated on some or all of the serine and threonine residues present in the C-terminal region. Contains one covalently linked retinal chromophore.

The protein localises to the membrane. The protein resides in the cell projection. It localises to the cilium. Its subcellular location is the photoreceptor outer segment. Photoreceptor required for image-forming vision at low light intensity. While most salt water fish species use retinal as chromophore, most freshwater fish use 3-dehydroretinal, or a mixture of retinal and 3-dehydroretinal. Light-induced isomerization of 11-cis to all-trans retinal triggers a conformational change that activates signaling via G-proteins. Subsequent receptor phosphorylation mediates displacement of the bound G-protein alpha subunit by arrestin and terminates signaling. The protein is Rhodopsin (rho) of Sargocentron punctatissimum (Speckled squirrelfish).